The following is a 277-amino-acid chain: Large ribosomal subunit protein uL2 (277 aa).

Disordered stretches follow at residues 37–60 and 223–265; these read KNSTAGRNNNGHITTRHKGGGHKH and VVMN…KRTD. The span at 39–49 shows a compositional bias: polar residues; sequence STAGRNNNGHI. Residues 50-60 show a composition bias toward basic residues; sequence TTRHKGGGHKH. Basic and acidic residues predominate over residues 229-244; that stretch reads DHPHGGGEGRTGEARE.

The protein belongs to the universal ribosomal protein uL2 family. As to quaternary structure, part of the 50S ribosomal subunit. Forms a bridge to the 30S subunit in the 70S ribosome.

One of the primary rRNA binding proteins. Required for association of the 30S and 50S subunits to form the 70S ribosome, for tRNA binding and peptide bond formation. It has been suggested to have peptidyltransferase activity; this is somewhat controversial. Makes several contacts with the 16S rRNA in the 70S ribosome. The protein is Large ribosomal subunit protein uL2 of Neisseria meningitidis serogroup A / serotype 4A (strain DSM 15465 / Z2491).